Here is a 58-residue protein sequence, read N- to C-terminus: Large ribosomal subunit protein eL24 (58 aa).

Cysteine 6, cysteine 9, cysteine 32, and cysteine 36 together coordinate Zn(2+). A C4-type zinc finger spans residues 6-36; that stretch reads CSFCGYDIEPGTGKMYVRRDGRVFYFCSGKC.

It belongs to the eukaryotic ribosomal protein eL24 family. In terms of assembly, part of the 50S ribosomal subunit. Forms a cluster with proteins L3 and L14. Requires Zn(2+) as cofactor.

Functionally, binds to the 23S rRNA. This chain is Large ribosomal subunit protein eL24, found in Archaeoglobus fulgidus (strain ATCC 49558 / DSM 4304 / JCM 9628 / NBRC 100126 / VC-16).